Consider the following 189-residue polypeptide: uncharacterized protein (189 aa).

A signal peptide spans 1 to 19 (MNKLTILFLILALISVIYA). A disordered region spans residues 24-189 (PSSSEDSSSN…GSGSSGTVYY (166 aa)). The span at 25 to 69 (SSSEDSSSNDSNSQVTGSQSYSGSQSDSNSGSESHTINTGSSYSG) shows a compositional bias: low complexity. A compositionally biased stretch (gly residues) spans 70 to 101 (SGSGSSGISGGSGSGSGSGSGSGSGSGSGSGA). The segment covering 102–142 (VSGSQSGSGAVSGSQSGSGAVSGSQSGVQTGSQSGAGSASG) has biased composition (low complexity). Over residues 144–157 (FTGNPSGSQSQEIN) the composition is skewed to polar residues. A compositionally biased stretch (gly residues) spans 165 to 183 (SGSGAPTGAATGSGSGSGS).

This is an uncharacterized protein from Dictyostelium discoideum (Social amoeba).